The chain runs to 110 residues: Insulin (110 aa).

An N-terminal signal peptide occupies residues 1 to 24 (MALWMRLLPLLALLALWAPAPTRA). 3 cysteine pairs are disulfide-bonded: Cys31/Cys96, Cys43/Cys109, and Cys95/Cys100. Positions 57-87 (EVEDLQVRDVELAGAPGEGGLQPLALEGALQ) are cleaved as a propeptide — c peptide.

This sequence belongs to the insulin family. In terms of assembly, heterodimer of a B chain and an A chain linked by two disulfide bonds.

It localises to the secreted. Its function is as follows. Insulin decreases blood glucose concentration. It increases cell permeability to monosaccharides, amino acids and fatty acids. It accelerates glycolysis, the pentose phosphate cycle, and glycogen synthesis in liver. The sequence is that of Insulin (INS) from Canis lupus familiaris (Dog).